The chain runs to 105 residues: Small ribosomal subunit protein uS10 (105 aa).

Belongs to the universal ribosomal protein uS10 family. As to quaternary structure, part of the 30S ribosomal subunit.

Its function is as follows. Involved in the binding of tRNA to the ribosomes. In Rickettsia canadensis (strain McKiel), this protein is Small ribosomal subunit protein uS10.